The chain runs to 25 residues: Kappa-conotoxin RIIIJ (25 aa).

4-hydroxyproline occurs at positions 2, 3, 7, 8, 13, 15, and 21. 3 disulfide bridges follow: cysteine 4-cysteine 17, cysteine 5-cysteine 22, and cysteine 12-cysteine 23.

It belongs to the conotoxin M superfamily. As to expression, expressed by the venom duct.

It is found in the secreted. Kappa-conotoxins inhibits voltage-gated potassium channels. This toxin dose-dependently and reversibly inhibits the Kv1.2/KCNA2 channel in mammalia. Does not exert protective effect on cardiac tissue when administered after an ischemic event. This is Kappa-conotoxin RIIIJ from Conus radiatus (Rayed cone).